Consider the following 324-residue polypeptide: Cyclin-dependent kinase C-3 (324 aa).

Positions 27-320 (FRRIRKIGEG…AHDALCAAYF (294 aa)) constitute a Protein kinase domain. ATP is bound by residues 33 to 41 (IGEGTYGEV) and K56. At T37 the chain carries Phosphothreonine. Residue Y38 is modified to Phosphotyrosine. D160 acts as the Proton acceptor in catalysis. T193 is subject to Phosphothreonine.

The protein belongs to the protein kinase superfamily. CMGC Ser/Thr protein kinase family. CDC2/CDKX subfamily.

It carries out the reaction L-seryl-[protein] + ATP = O-phospho-L-seryl-[protein] + ADP + H(+). The enzyme catalyses L-threonyl-[protein] + ATP = O-phospho-L-threonyl-[protein] + ADP + H(+). The catalysed reaction is [DNA-directed RNA polymerase] + ATP = phospho-[DNA-directed RNA polymerase] + ADP + H(+). The protein is Cyclin-dependent kinase C-3 (CDKC-1) of Oryza sativa subsp. japonica (Rice).